Here is a 249-residue protein sequence, read N- to C-terminus: Probable transcriptional regulatory protein Psyc_0938 (249 aa).

Belongs to the TACO1 family.

It is found in the cytoplasm. This Psychrobacter arcticus (strain DSM 17307 / VKM B-2377 / 273-4) protein is Probable transcriptional regulatory protein Psyc_0938.